The primary structure comprises 181 residues: Oligoribonuclease (181 aa).

In terms of domain architecture, Exonuclease spans 8-171 (LIWIDLEMTG…DDIRESIAEL (164 aa)). The active site involves tyrosine 129.

It belongs to the oligoribonuclease family.

It is found in the cytoplasm. Functionally, 3'-to-5' exoribonuclease specific for small oligoribonucleotides. This chain is Oligoribonuclease, found in Alcanivorax borkumensis (strain ATCC 700651 / DSM 11573 / NCIMB 13689 / SK2).